Here is a 242-residue protein sequence, read N- to C-terminus: 1-(5-phosphoribosyl)-5-[(5-phosphoribosylamino)methylideneamino] imidazole-4-carboxamide isomerase (242 aa).

Asp8 acts as the Proton acceptor in catalysis. Asp129 serves as the catalytic Proton donor.

It belongs to the HisA/HisF family.

It is found in the cytoplasm. The enzyme catalyses 1-(5-phospho-beta-D-ribosyl)-5-[(5-phospho-beta-D-ribosylamino)methylideneamino]imidazole-4-carboxamide = 5-[(5-phospho-1-deoxy-D-ribulos-1-ylimino)methylamino]-1-(5-phospho-beta-D-ribosyl)imidazole-4-carboxamide. It participates in amino-acid biosynthesis; L-histidine biosynthesis; L-histidine from 5-phospho-alpha-D-ribose 1-diphosphate: step 4/9. The chain is 1-(5-phosphoribosyl)-5-[(5-phosphoribosylamino)methylideneamino] imidazole-4-carboxamide isomerase from Clostridium botulinum (strain ATCC 19397 / Type A).